The chain runs to 384 residues: tRNA-specific 2-thiouridylase MnmA (384 aa).

ATP contacts are provided by residues 9–16 and Met35; that span reads GMSGGVDS. The interval 95-97 is interaction with target base in tRNA; the sequence is NPD. The active-site Nucleophile is Cys100. A disulfide bridge connects residues Cys100 and Cys196. Position 124 (Gly124) interacts with ATP. The interval 146 to 148 is interaction with tRNA; the sequence is KDQ. Residue Cys196 is the Cysteine persulfide intermediate of the active site. An interaction with tRNA region spans residues 308-309; that stretch reads RY.

This sequence belongs to the MnmA/TRMU family.

It is found in the cytoplasm. The catalysed reaction is S-sulfanyl-L-cysteinyl-[protein] + uridine(34) in tRNA + AH2 + ATP = 2-thiouridine(34) in tRNA + L-cysteinyl-[protein] + A + AMP + diphosphate + H(+). Its function is as follows. Catalyzes the 2-thiolation of uridine at the wobble position (U34) of tRNA, leading to the formation of s(2)U34. This Burkholderia vietnamiensis (strain G4 / LMG 22486) (Burkholderia cepacia (strain R1808)) protein is tRNA-specific 2-thiouridylase MnmA.